The sequence spans 318 residues: Probable aminopeptidase YbaC (318 aa).

Ser-115 functions as the Nucleophile in the catalytic mechanism. Residue Asp-266 is part of the active site. Residue His-296 is the Proton donor of the active site.

This sequence belongs to the peptidase S33 family.

In terms of biological role, probable aminopeptidase. The sequence is that of Probable aminopeptidase YbaC (ybaC) from Bacillus subtilis (strain 168).